A 110-amino-acid polypeptide reads, in one-letter code: Iron-sulfur cluster assembly protein CyaY (110 aa).

Belongs to the frataxin family.

In terms of biological role, involved in iron-sulfur (Fe-S) cluster assembly. May act as a regulator of Fe-S biogenesis. This Pseudomonas fluorescens (strain Pf0-1) protein is Iron-sulfur cluster assembly protein CyaY.